The chain runs to 33 residues: MLLVSRNICRIKGNTIDWRNLKKDLSMTWIILK.

It localises to the cytoplasm. The protein localises to the nucleus. This is an uncharacterized protein from Schizosaccharomyces pombe (strain 972 / ATCC 24843) (Fission yeast).